The following is a 557-amino-acid chain: Dihydroxy-acid dehydratase (557 aa).

Mg(2+) is bound at residue aspartate 78. Position 119 (cysteine 119) interacts with [2Fe-2S] cluster. Mg(2+) is bound by residues aspartate 120 and lysine 121. N6-carboxylysine is present on lysine 121. Residue cysteine 192 coordinates [2Fe-2S] cluster. A Mg(2+)-binding site is contributed by glutamate 442. The Proton acceptor role is filled by serine 468.

This sequence belongs to the IlvD/Edd family. Homodimer. The cofactor is [2Fe-2S] cluster. Mg(2+) serves as cofactor.

The catalysed reaction is (2R)-2,3-dihydroxy-3-methylbutanoate = 3-methyl-2-oxobutanoate + H2O. It catalyses the reaction (2R,3R)-2,3-dihydroxy-3-methylpentanoate = (S)-3-methyl-2-oxopentanoate + H2O. Its pathway is amino-acid biosynthesis; L-isoleucine biosynthesis; L-isoleucine from 2-oxobutanoate: step 3/4. It participates in amino-acid biosynthesis; L-valine biosynthesis; L-valine from pyruvate: step 3/4. Functionally, functions in the biosynthesis of branched-chain amino acids. Catalyzes the dehydration of (2R,3R)-2,3-dihydroxy-3-methylpentanoate (2,3-dihydroxy-3-methylvalerate) into 2-oxo-3-methylpentanoate (2-oxo-3-methylvalerate) and of (2R)-2,3-dihydroxy-3-methylbutanoate (2,3-dihydroxyisovalerate) into 2-oxo-3-methylbutanoate (2-oxoisovalerate), the penultimate precursor to L-isoleucine and L-valine, respectively. In Bacillus cereus (strain AH187), this protein is Dihydroxy-acid dehydratase.